Consider the following 372-residue polypeptide: L-selectin (372 aa).

Positions 1–28 are cleaved as a signal peptide; that stretch reads MIFPWKCQSTQRDLCNIFKLWGWTMLCC. The propeptide occupies 29–38; it reads DFLAHHGTDC. Topologically, residues 39 to 332 are extracellular; sequence WTYHYSEKPM…FSMIKEGDYN (294 aa). The C-type lectin domain occupies 55–155; it reads RFCRENYTDL…ACHKLKAALC (101 aa). 10 disulfides stabilise this stretch: Cys-57–Cys-155, Cys-128–Cys-147, Cys-128–Cys-160, Cys-160–Cys-171, Cys-165–Cys-180, Cys-182–Cys-191, Cys-197–Cys-241, Cys-227–Cys-254, Cys-259–Cys-303, and Cys-289–Cys-316. N-linked (GlcNAc...) asparagine glycans are attached at residues Asn-60 and Asn-104. Glu-118, Asn-120, Glu-126, Asn-143, and Asp-144 together coordinate Ca(2+). Residues 156-192 form the EGF-like domain; the sequence is YTASCQPWSCSGHGECVEIINNYTCNCDVGYYGPQCQ. Asn-177 is a glycosylation site (N-linked (GlcNAc...) asparagine). Sushi domains follow at residues 195–256 and 257–318; these read IQCE…TCQV and IQCE…ICQK. N-linked (GlcNAc...) asparagine glycosylation is found at Asn-216, Asn-226, Asn-232, Asn-246, and Asn-271. A helical membrane pass occupies residues 333–355; that stretch reads PLFIPVAVMVTAFSGLAFIIWLA. Residues 356 to 372 are Cytoplasmic-facing; the sequence is RRLKKGKKSKKSMDDPY.

Belongs to the selectin/LECAM family. In terms of assembly, interaction with SELPLG/PSGL1 and PODXL2 is required for promoting recruitment and rolling of leukocytes. This interaction is dependent on the sialyl Lewis X glycan modification of SELPLG and PODXL2, and tyrosine sulfation modifications of SELPLG. Sulfation on 'Tyr-51' of SELPLG is important for L-selectin binding. Post-translationally, N-glycosylated.

It is found in the cell membrane. Its function is as follows. Calcium-dependent lectin that mediates cell adhesion by binding to glycoproteins on neighboring cells. Mediates the adherence of lymphocytes to endothelial cells of high endothelial venules in peripheral lymph nodes. Promotes initial tethering and rolling of leukocytes in endothelia. In Pongo pygmaeus (Bornean orangutan), this protein is L-selectin (SELL).